Reading from the N-terminus, the 69-residue chain is DNA gyrase inhibitor YacG (69 aa).

Zn(2+)-binding residues include cysteine 14, cysteine 17, cysteine 33, and cysteine 37.

This sequence belongs to the DNA gyrase inhibitor YacG family. Interacts with GyrB. It depends on Zn(2+) as a cofactor.

Its function is as follows. Inhibits all the catalytic activities of DNA gyrase by preventing its interaction with DNA. Acts by binding directly to the C-terminal domain of GyrB, which probably disrupts DNA binding by the gyrase. The polypeptide is DNA gyrase inhibitor YacG (Aliivibrio salmonicida (strain LFI1238) (Vibrio salmonicida (strain LFI1238))).